Consider the following 394-residue polypeptide: Cytochrome b561 and DOMON domain-containing protein At4g12980 (394 aa).

An N-terminal signal peptide occupies residues 1–24; sequence MDSSYLRISLSFLFWALLLSPAVS. One can recognise a DOMON domain in the interval 49–169; it reads LKAILHYSYD…GKVNQVWQVG (121 aa). Residues 184-381 form the Cytochrome b561 domain; that stretch reads GPNLNSVGSL…LEVVTWVIVL (198 aa). A run of 2 helical transmembrane segments spans residues 220 to 240 and 252 to 272; these read IHGI…AMIA and AWFY…VAGW. The heme b site is built by histidine 221, histidine 257, and histidine 290. The helical transmembrane segment at 292-312 threads the bilayer; the sequence is NIGICLFSIATLQMFAMLLRP. Histidine 326 is a heme b binding site. Transmembrane regions (helical) follow at residues 328 to 348 and 361 to 381; these read GVGY…LSIL and VIGT…VIVL.

Heme b is required as a cofactor.

The protein resides in the membrane. May act as a catecholamine-responsive trans-membrane electron transporter. In Arabidopsis thaliana (Mouse-ear cress), this protein is Cytochrome b561 and DOMON domain-containing protein At4g12980.